Consider the following 319-residue polypeptide: Acetyl-coenzyme A carboxylase carboxyl transferase subunit alpha (319 aa).

The region spanning 35 to 296 is the CoA carboxyltransferase C-terminal domain; the sequence is DLEKEIKQLE…KQRLLEQLKE (262 aa).

The protein belongs to the AccA family. In terms of assembly, acetyl-CoA carboxylase is a heterohexamer composed of biotin carboxyl carrier protein (AccB), biotin carboxylase (AccC) and two subunits each of ACCase subunit alpha (AccA) and ACCase subunit beta (AccD).

Its subcellular location is the cytoplasm. It catalyses the reaction N(6)-carboxybiotinyl-L-lysyl-[protein] + acetyl-CoA = N(6)-biotinyl-L-lysyl-[protein] + malonyl-CoA. It participates in lipid metabolism; malonyl-CoA biosynthesis; malonyl-CoA from acetyl-CoA: step 1/1. Component of the acetyl coenzyme A carboxylase (ACC) complex. First, biotin carboxylase catalyzes the carboxylation of biotin on its carrier protein (BCCP) and then the CO(2) group is transferred by the carboxyltransferase to acetyl-CoA to form malonyl-CoA. This is Acetyl-coenzyme A carboxylase carboxyl transferase subunit alpha from Aliivibrio fischeri (strain MJ11) (Vibrio fischeri).